A 357-amino-acid polypeptide reads, in one-letter code: tRNA N6-adenosine threonylcarbamoyltransferase (357 aa).

Fe cation is bound by residues histidine 115 and histidine 119. Substrate-binding positions include 137-141 (LASGG), aspartate 170, glycine 183, and asparagine 281. Aspartate 309 provides a ligand contact to Fe cation.

The protein belongs to the KAE1 / TsaD family. The cofactor is Fe(2+).

Its subcellular location is the cytoplasm. The enzyme catalyses L-threonylcarbamoyladenylate + adenosine(37) in tRNA = N(6)-L-threonylcarbamoyladenosine(37) in tRNA + AMP + H(+). Functionally, required for the formation of a threonylcarbamoyl group on adenosine at position 37 (t(6)A37) in tRNAs that read codons beginning with adenine. Is involved in the transfer of the threonylcarbamoyl moiety of threonylcarbamoyl-AMP (TC-AMP) to the N6 group of A37, together with TsaE and TsaB. TsaD likely plays a direct catalytic role in this reaction. In Afipia carboxidovorans (strain ATCC 49405 / DSM 1227 / KCTC 32145 / OM5) (Oligotropha carboxidovorans), this protein is tRNA N6-adenosine threonylcarbamoyltransferase.